The sequence spans 186 residues: Nuclear transcription factor Y subunit B-1 (186 aa).

The segment at 1–24 (MAGNKKRGGRNMDQVKKAAVRSDG) is disordered. Residues 34–40 (LPMANLV) mediate DNA binding. A subunit association domain (SAD) region spans residues 61–72 (THDCAVEFVGFV). The interval 123–142 (GGNRRVAPPPPAAATPLTPG) is disordered.

The protein belongs to the NFYB/HAP3 subunit family. Heterotrimeric transcription factor composed of three components, NF-YA, NF-YB and NF-YC. NF-YB and NF-YC must interact and dimerize for NF-YA association and DNA binding. Interacts with MADS18. Forms a ternary complex with the MADS6-MADS18 heterodimer. Expressed in developing kernels.

The protein resides in the nucleus. In terms of biological role, component of the NF-Y/HAP transcription factor complex. The NF-Y complex stimulates the transcription of various genes by recognizing and binding to a CCAAT motif in promoters. May act through association with MADS-box proteins. May regulate the expression of genes involved in flowering. The sequence is that of Nuclear transcription factor Y subunit B-1 (NFYB1) from Oryza sativa subsp. japonica (Rice).